Consider the following 145-residue polypeptide: Small ribosomal subunit protein uS19 (145 aa).

Belongs to the universal ribosomal protein uS19 family. Component of the small ribosomal subunit.

It is found in the cytoplasm. In terms of biological role, component of the small ribosomal subunit. The ribosome is a large ribonucleoprotein complex responsible for the synthesis of proteins in the cell. This is Small ribosomal subunit protein uS19 (rps15) from Xenopus laevis (African clawed frog).